The following is a 305-amino-acid chain: MFDSDKNSILQSDFCQRLVVHSLLLVFLVILLCTSLYPSSAFIVGLLSSTCAAIGTYEMSSMVRMKFPFSFTRYSSIGSAIFVALTCLTARCKMLLPEHVDLIPWFFLFFWTVHLVFKSRHYKLGPIGSTGLALFCMLYVSVPIRLFLHILYGFVHTDTPFIGIWWAIFLIATTKSSDIFGYFFGKAFGKKRIAPVISPNKTVVGFVAGCIASILVSLIFYSHLPKSFANQIAMPWILVALGIILGISGFFGDIIESTFKRDAQIKNSSDLESIGGMLDVLDSLLLSTPIVYAILLITQNGTFLG.

The next 7 membrane-spanning stretches (helical) occupy residues 24–44 (LLVF…AFIV), 97–117 (PEHV…HLVF), 124–144 (LGPI…SVPI), 151–171 (LYGF…IFLI), 202–222 (TVVG…IFYS), 232–252 (IAMP…GFFG), and 277–297 (MLDV…ILLI).

The protein belongs to the CDS family.

The protein resides in the cell membrane. The enzyme catalyses a 1,2-diacyl-sn-glycero-3-phosphate + CTP + H(+) = a CDP-1,2-diacyl-sn-glycerol + diphosphate. It participates in phospholipid metabolism; CDP-diacylglycerol biosynthesis; CDP-diacylglycerol from sn-glycerol 3-phosphate: step 3/3. The polypeptide is Phosphatidate cytidylyltransferase (cdsA) (Chlamydia muridarum (strain MoPn / Nigg)).